Here is a 288-residue protein sequence, read N- to C-terminus: Energy-coupling factor transporter ATP-binding protein EcfA2 (288 aa).

The region spanning 3-246 (ITFDHVSFTY…PAWLKANQLG (244 aa)) is the ABC transporter domain. Residue 40 to 47 (GHTGSGKS) coordinates ATP. Glutamate 171 functions as the Proton acceptor in the catalytic mechanism.

This sequence belongs to the ABC transporter superfamily. Energy-coupling factor EcfA family. As to quaternary structure, forms a stable energy-coupling factor (ECF) transporter complex probably composed of 2 membrane-embedded substrate-binding proteins (S component), 2 ATP-binding proteins (A component) and 2 transmembrane proteins (T component). This complex interacts with a number of substrate-specific components, including FolT and ThiT for 5-formyltetrahydrofolate and thiamine respectively.

It localises to the cell membrane. ATP-binding (A) component of a common energy-coupling factor (ECF) ABC-transporter complex. Unlike classic ABC transporters this ECF transporter provides the energy necessary to transport a number of different substrates including 5-formyltetrahydrofolate and thiamine. Expression of the complex plus FolT or ThiT in Lactococcus lactis subsp. cremoris (strain NZ9000) allows 5-formyltetrahydrofolate or thiamine uptake respectively; 5-formyltetrahydrofolate or thiamine are not taken up in the absence of FolT/ThiT or the EcfA1A2T complex. Deenergized L.lactis subsp. cremoris (treated with 2-deoxyglucose) do not take up substrate. This Lacticaseibacillus paracasei (strain ATCC 334 / BCRC 17002 / CCUG 31169 / CIP 107868 / KCTC 3260 / NRRL B-441) (Lactobacillus paracasei) protein is Energy-coupling factor transporter ATP-binding protein EcfA2.